Consider the following 244-residue polypeptide: 6-carboxyhexanoate--CoA ligase (244 aa).

This sequence belongs to the BioW family. Homodimer. The cofactor is Mg(2+).

It catalyses the reaction heptanedioate + ATP + CoA = 6-carboxyhexanoyl-CoA + AMP + diphosphate. It participates in metabolic intermediate metabolism; pimeloyl-CoA biosynthesis; pimeloyl-CoA from pimelate: step 1/1. Its function is as follows. Catalyzes the transformation of pimelate into pimeloyl-CoA with concomitant hydrolysis of ATP to AMP. This Methanococcus maripaludis (strain C7 / ATCC BAA-1331) protein is 6-carboxyhexanoate--CoA ligase.